A 352-amino-acid polypeptide reads, in one-letter code: UDP-3-O-acylglucosamine N-acyltransferase (352 aa).

His242 (proton acceptor) is an active-site residue.

The protein belongs to the transferase hexapeptide repeat family. LpxD subfamily. As to quaternary structure, homotrimer.

It catalyses the reaction a UDP-3-O-[(3R)-3-hydroxyacyl]-alpha-D-glucosamine + a (3R)-hydroxyacyl-[ACP] = a UDP-2-N,3-O-bis[(3R)-3-hydroxyacyl]-alpha-D-glucosamine + holo-[ACP] + H(+). The protein operates within bacterial outer membrane biogenesis; LPS lipid A biosynthesis. Functionally, catalyzes the N-acylation of UDP-3-O-acylglucosamine using 3-hydroxyacyl-ACP as the acyl donor. Is involved in the biosynthesis of lipid A, a phosphorylated glycolipid that anchors the lipopolysaccharide to the outer membrane of the cell. In Alkalilimnicola ehrlichii (strain ATCC BAA-1101 / DSM 17681 / MLHE-1), this protein is UDP-3-O-acylglucosamine N-acyltransferase.